Reading from the N-terminus, the 489-residue chain is Homoserine O-acetyltransferase (489 aa).

The region spanning 47–354 (NAILVCHALT…NYGHDSFLLE (308 aa)) is the AB hydrolase-1 domain. Ser152 functions as the Nucleophile in the catalytic mechanism. Arg221 is a binding site for substrate. Active-site residues include Asp315 and His348. Asp349 is a substrate binding site. 2 CBS domains span residues 375-434 (MIED…NLEE) and 436-489 (MTKN…IEEF).

Belongs to the AB hydrolase superfamily. MetX family. As to quaternary structure, homodimer.

The protein localises to the cytoplasm. The catalysed reaction is L-homoserine + acetyl-CoA = O-acetyl-L-homoserine + CoA. The protein operates within amino-acid biosynthesis; L-methionine biosynthesis via de novo pathway; O-acetyl-L-homoserine from L-homoserine: step 1/1. In terms of biological role, transfers an acetyl group from acetyl-CoA to L-homoserine, forming acetyl-L-homoserine. The chain is Homoserine O-acetyltransferase from Methanohalobium evestigatum (strain ATCC BAA-1072 / DSM 3721 / NBRC 107634 / OCM 161 / Z-7303).